The chain runs to 94 residues: YcgL domain-containing protein VP0875 (94 aa).

In terms of domain architecture, YcgL spans 1–84; that stretch reads MLCSIYKSSK…PPENLLEKYK (84 aa).

The protein is YcgL domain-containing protein VP0875 of Vibrio parahaemolyticus serotype O3:K6 (strain RIMD 2210633).